The sequence spans 844 residues: DNA mismatch repair protein MutS (844 aa).

610–617 (GPNMGGKS) provides a ligand contact to ATP.

The protein belongs to the DNA mismatch repair MutS family.

Functionally, this protein is involved in the repair of mismatches in DNA. It is possible that it carries out the mismatch recognition step. This protein has a weak ATPase activity. The sequence is that of DNA mismatch repair protein MutS from Francisella tularensis subsp. mediasiatica (strain FSC147).